Consider the following 298-residue polypeptide: Exosome complex component Rrp4 (298 aa).

One can recognise an S1 motif domain in the interval 63-131 (GDVVIGKIKD…EVKKVKLGLK (69 aa)). Residues 139–197 (RGGIIVDITPTKVPRLIGKKGSMINMIKDKTNCKIIVGQNGLVWVKGEEDMEQLTKDII) form the KH domain. Positions 276–298 (KNKKDKPLSYGNNSGNSYILNNR) are disordered. A compositionally biased stretch (polar residues) spans 285 to 298 (YGNNSGNSYILNNR).

Belongs to the RRP4 family. In terms of assembly, component of the archaeal exosome complex. Forms a trimer of Rrp4 and/or Csl4 subunits. The trimer associates with a hexameric ring-like arrangement composed of 3 Rrp41-Rrp42 heterodimers.

It is found in the cytoplasm. Functionally, non-catalytic component of the exosome, which is a complex involved in RNA degradation. Increases the RNA binding and the efficiency of RNA degradation. Confers strong poly(A) specificity to the exosome. This Methanobrevibacter smithii (strain ATCC 35061 / DSM 861 / OCM 144 / PS) protein is Exosome complex component Rrp4.